Here is a 290-residue protein sequence, read N- to C-terminus: Ribosomal RNA small subunit methyltransferase A (290 aa).

The S-adenosyl-L-methionine site is built by asparagine 27, leucine 29, glycine 54, glutamate 75, aspartate 100, and asparagine 125.

This sequence belongs to the class I-like SAM-binding methyltransferase superfamily. rRNA adenine N(6)-methyltransferase family. RsmA subfamily.

It localises to the cytoplasm. It carries out the reaction adenosine(1518)/adenosine(1519) in 16S rRNA + 4 S-adenosyl-L-methionine = N(6)-dimethyladenosine(1518)/N(6)-dimethyladenosine(1519) in 16S rRNA + 4 S-adenosyl-L-homocysteine + 4 H(+). Specifically dimethylates two adjacent adenosines (A1518 and A1519) in the loop of a conserved hairpin near the 3'-end of 16S rRNA in the 30S particle. May play a critical role in biogenesis of 30S subunits. This Streptococcus pneumoniae (strain P1031) protein is Ribosomal RNA small subunit methyltransferase A.